The following is a 402-amino-acid chain: MAAGSSAVWAAQHPACSGGKFHHLSPSHSHCRPRRALQTPPALPARRSGASPPRASLAAAAPAVAVRTASEEAVYEVVLRQAALVEAATPQRRRTRQPRWAEEEEEERVLGWGLLGDAYDRCGEVCAEYAKTFYLGTQLMTPERRKAVWAIYVWCRRTDELVDGPNASYITPTALDRWEKRLEDLFEGRPYDMYDAALSDTVSKFPVDIQPFKDMVQGMRLDLWKSRYMTFDELYLYCYYVAGTVGLMTVPVMGIAPDSKASTESVYNAALALGIANQLTNILRDVGEDARRGRIYLPLDELAQAGLTEEDIFRGKVTGKWRRFMKGQIQRARLFFDEAEKGVTHLDSASRWPVLASLWLYRQILDAIEANDYNNFTKRAYVGKAKKLLSLPLAYARAAVAP.

A chloroplast-targeting transit peptide spans 1–54 (MAAGSSAVWAAQHPACSGGKFHHLSPSHSHCRPRRALQTPPALPARRSGASPPR). The segment covering 20–35 (KFHHLSPSHSHCRPRR) has biased composition (basic residues). Positions 20–54 (KFHHLSPSHSHCRPRRALQTPPALPARRSGASPPR) are disordered. Positions 44–54 (PARRSGASPPR) are enriched in low complexity.

It belongs to the phytoene/squalene synthase family. As to expression, expressed in leaves and endosperm.

The protein resides in the plastid. It localises to the chloroplast. The protein localises to the plastoglobule. The catalysed reaction is 2 (2E,6E,10E)-geranylgeranyl diphosphate = 15-cis-phytoene + 2 diphosphate. Its function is as follows. Catalyzes the conversion of geranylgeranyl diphosphate to phytoene. Mediates the first committed step in carotenoid biosynthesis. This Zea mays (Maize) protein is Phytoene synthase 2, chloroplastic.